The primary structure comprises 1333 residues: Vascular endothelial growth factor receptor 1 (1333 aa).

Residues 1-22 (MVSCWDTAVLPYALLGCLLLTG) form the signal peptide. Over 23–759 (YGSGSKLKVP…QGTSDKSNLE (737 aa)) the chain is Extracellular. 7 Ig-like C2-type domains span residues 32–124 (PELS…AESS), 152–215 (GRQL…VNGH), 231–328 (LDVQ…TSVH), 334–429 (FISV…NVKP), 430–550 (QIYE…RNIK), 557–656 (PNGF…EVLV), and 662–748 (PHLL…AYLT). Disulfide bonds link cysteine 53/cysteine 108 and cysteine 159/cysteine 208. N-linked (GlcNAc...) asparagine glycosylation is found at asparagine 101, asparagine 165, asparagine 197, and asparagine 252. The cysteines at positions 253 and 312 are disulfide-linked. N-linked (GlcNAc...) asparagine glycans are attached at residues asparagine 324, asparagine 418, asparagine 475, asparagine 517, asparagine 598, asparagine 626, asparagine 667, and asparagine 714. 2 disulfide bridges follow: cysteine 455-cysteine 536 and cysteine 578-cysteine 637. A disulfide bridge links cysteine 683 with cysteine 732. Residues 760–781 (LITLTCTCVAATLFWLLLTLFI) traverse the membrane as a helical segment. Over 782–1333 (RKLKRSSSEV…SVVLYSSPPA (552 aa)) the chain is Cytoplasmic. One can recognise a Protein kinase domain in the interval 828-1158 (LKLGKSLGRG…ELVEKLGDLL (331 aa)). ATP contacts are provided by residues 834-842 (LGRGAFGKV) and lysine 862. The residue at position 915 (tyrosine 915) is a Phosphotyrosine; by autocatalysis. Residues 947–983 (EPGLEQGQKPRLDSVSSSSVTSSSFPEDRSVSDVEGD) are disordered. A compositionally biased stretch (low complexity) spans 960–970 (SVSSSSVTSSS). The active-site Proton acceptor is the aspartate 1022. A phosphotyrosine; by autocatalysis mark is found at tyrosine 1053, tyrosine 1169, tyrosine 1213, tyrosine 1242, tyrosine 1322, and tyrosine 1328.

This sequence belongs to the protein kinase superfamily. Tyr protein kinase family. CSF-1/PDGF receptor subfamily. In terms of assembly, interacts with VEGFA, VEGFB and PGF. Monomer in the absence of bound VEGFA, VEGFB or PGF. Homodimer in the presence of bound VEGFA, VEGFB and PGF. Can also form a heterodimer with KDR. Interacts (tyrosine phosphorylated) with CBL, CRK, GRB2, NCK1, PIK3R1, PLCG, PSEN1 and PTPN11. Probably interacts with PTPRB. Interacts with RACK1. Identified in a complex with CBL and CD2AP. In terms of processing, N-glycosylated. Post-translationally, ubiquitinated after VEGFA-mediated autophosphorylation, leading to proteolytic degradation. Autophosphorylated on tyrosine residues upon ligand binding. Autophosphorylation occurs in trans, i.e. one subunit of the dimeric receptor phosphorylates tyrosine residues on the other subunit. Phosphorylation at Tyr-1169 is important for interaction with PLCG. Phosphorylation at Tyr-1213 is important for interaction with PIK3R1, PTPN11, GRB2, and PLCG. Phosphorylation at Tyr-1328 is important for endocytosis and for interaction with CBL, NCK1 and CRK. Is probably dephosphorylated by PTPRB.

It is found in the cell membrane. It localises to the endosome. It catalyses the reaction L-tyrosyl-[protein] + ATP = O-phospho-L-tyrosyl-[protein] + ADP + H(+). Present in an inactive conformation in the absence of bound ligand. Binding of VEGFA, VEGFB or PGF leads to dimerization and activation by autophosphorylation on tyrosine residues. Tyrosine-protein kinase that acts as a cell-surface receptor for VEGFA, VEGFB and PGF, and plays an essential role in the development of embryonic vasculature, the regulation of angiogenesis, cell survival, cell migration, macrophage function, chemotaxis, and cancer cell invasion. Acts as a positive regulator of postnatal retinal hyaloid vessel regression. May play an essential role as a negative regulator of embryonic angiogenesis by inhibiting excessive proliferation of endothelial cells. Can promote endothelial cell proliferation, survival and angiogenesis in adulthood. Its function in promoting cell proliferation seems to be cell-type specific. Promotes PGF-mediated proliferation of endothelial cells, and proliferation of some types of cancer cells, but does not promote proliferation of normal fibroblasts. Has very high affinity for VEGFA and relatively low protein kinase activity; may function as a negative regulator of VEGFA signaling by limiting the amount of free VEGFA and preventing its binding to KDR. Modulates KDR signaling by forming heterodimers with KDR. Ligand binding leads to the activation of several signaling cascades. Activation of PLCG leads to the production of the cellular signaling molecules diacylglycerol and inositol 1,4,5-trisphosphate and the activation of protein kinase C. Mediates phosphorylation of PIK3R1, the regulatory subunit of phosphatidylinositol 3-kinase, leading to the activation of phosphatidylinositol kinase and the downstream signaling pathway. Mediates activation of MAPK1/ERK2, MAPK3/ERK1 and the MAP kinase signaling pathway, as well as of the AKT1 signaling pathway. Phosphorylates SRC, YES1 and PLCG, and may also phosphorylate CBL. Promotes phosphorylation of AKT1 and PTK2/FAK1. The polypeptide is Vascular endothelial growth factor receptor 1 (Flt1) (Mus musculus (Mouse)).